Reading from the N-terminus, the 287-residue chain is Elongation factor Ts (287 aa).

An involved in Mg(2+) ion dislocation from EF-Tu region spans residues 80–83 (TDFL).

The protein belongs to the EF-Ts family.

The protein localises to the cytoplasm. Functionally, associates with the EF-Tu.GDP complex and induces the exchange of GDP to GTP. It remains bound to the aminoacyl-tRNA.EF-Tu.GTP complex up to the GTP hydrolysis stage on the ribosome. This chain is Elongation factor Ts, found in Pseudomonas putida (strain ATCC 700007 / DSM 6899 / JCM 31910 / BCRC 17059 / LMG 24140 / F1).